The sequence spans 143 residues: MKASKQEKWLDESGENLGILRRLEGNAMLLAMESGGFSKEDLWFLQDEQGEEYVVFPQKIFVQLLSHIKNIQEEKLVMRLEKDIISQMPIDFDDAMVVAKNALESLRLNDGNLPDINTNTLAKDIKKKYPNLFFDIDYLRKSK.

Belongs to the UPF0763 family.

The protein is UPF0763 protein HH_0976 of Helicobacter hepaticus (strain ATCC 51449 / 3B1).